We begin with the raw amino-acid sequence, 269 residues long: Fructose-2,6-bisphosphatase TIGAR (269 aa).

His11 functions as the Tele-phosphohistidine intermediate in the catalytic mechanism. Glu89 serves as the catalytic Proton donor/acceptor.

It belongs to the phosphoglycerate mutase family. As to quaternary structure, interacts with HK2; the interaction increases hexokinase HK2 activity in a hypoxia- and HIF1A-dependent manner, resulting in the regulation of mitochondrial membrane potential, thus increasing NADPH production and decreasing intracellular ROS levels. Expressed in olfactory bulb, cerebellum, and cortex. Expressed in neurons and astrocytes (at protein level). Expressed in intestinal crypt.

It localises to the cytoplasm. Its subcellular location is the nucleus. It is found in the mitochondrion. The catalysed reaction is beta-D-fructose 2,6-bisphosphate + H2O = beta-D-fructose 6-phosphate + phosphate. Functionally, fructose-bisphosphatase hydrolyzing fructose-2,6-bisphosphate as well as fructose-1,6-bisphosphate. Acts as a negative regulator of glycolysis by lowering intracellular levels of fructose-2,6-bisphosphate in a p53/TP53-dependent manner, resulting in the pentose phosphate pathway (PPP) activation and NADPH production. Contributes to the generation of reduced glutathione to cause a decrease in intracellular reactive oxygen species (ROS) content, correlating with its ability to protect cells from oxidative or metabolic stress-induced cell death. Plays a role in promoting protection against cell death during hypoxia by decreasing mitochondria ROS levels in a HK2-dependent manner through a mechanism that is independent of its fructose-bisphosphatase activity. In response to cardiac damage stress, mediates p53-induced inhibition of myocyte mitophagy through ROS levels reduction and the subsequent inactivation of BNIP3. Reduced mitophagy results in an enhanced apoptotic myocyte cell death, and exacerbates cardiac damage. Plays a role in adult intestinal regeneration; contributes to the growth, proliferation and survival of intestinal crypts following tissue ablation. Plays a neuroprotective role against ischemic brain damage by enhancing PPP flux and preserving mitochondria functions. Protects glioma cells from hypoxia- and ROS-induced cell death by inhibiting glycolysis and activating mitochondrial energy metabolism and oxygen consumption in a TKTL1-dependent and p53/TP53-independent manner. Plays a role in cancer cell survival by promoting DNA repair through activating PPP flux in a CDK5-ATM-dependent signaling pathway during hypoxia and/or genome stress-induced DNA damage responses. Involved in intestinal tumor progression. This Mus musculus (Mouse) protein is Fructose-2,6-bisphosphatase TIGAR.